We begin with the raw amino-acid sequence, 328 residues long: Dof zinc finger protein PBF (328 aa).

Positions 33–56 (RDPKQTRAMPQIGGSGERKPRPQL) are disordered. The Dof-type zinc-finger motif lies at 60–114 (LKCPRCDSNNTKFCYYNNYSMSQPRYFCKACRRYWTHGGTLRNVPIGGGCRKNKH). The Zn(2+) site is built by Cys62, Cys65, Cys87, and Cys90. Disordered stretches follow at residues 124–144 (TSSSSSATYAPLSPSTNASSS) and 306–328 (WNKHNNNNNNNNNNNNNNNNKGQ).

Interacts with the bZIP transcription factor Opaque-2/O2. In terms of tissue distribution, seed endosperm.

It is found in the nucleus. Transcription factor that binds specifically to a 5'-AA[AG]G-3' consensus core sequence. May enhance the DNA binding of the bZIP transcription factor Opaque-2 to O2 binding site elements. In Zea mays (Maize), this protein is Dof zinc finger protein PBF (PBF).